We begin with the raw amino-acid sequence, 703 residues long: Zinc finger CCCH domain-containing protein 36 (703 aa).

4 disordered regions span residues 1–42 (MAGG…DPNG), 112–176 (LQLH…MKNK), 204–242 (VSGSDNQVYGNHGGTGEGSEIQHPSSSKEHQFKNSAGSS), and 442–481 (HGTLPLHQLTPDKDASHHKGADFDKGGTSRSTLHVSSSSQ). Over residues 9 to 25 (GLPAAGEAAKAGRVGVG) the composition is skewed to low complexity. Residues 112 to 125 (LQLHGDEKYQKKAG) are compositionally biased toward basic and acidic residues. The span at 149-169 (VSQSPPDSNALSSQRFGSSSP) shows a compositional bias: polar residues. The segment at 176–203 (KTRKRTCTFYAQGRCKNGKSCTFLHEGE) adopts a C3H1-type zinc-finger fold. Over residues 451 to 468 (TPDKDASHHKGADFDKGG) the composition is skewed to basic and acidic residues. Residues 470–481 (SRSTLHVSSSSQ) show a composition bias toward low complexity.

The sequence is that of Zinc finger CCCH domain-containing protein 36 from Oryza sativa subsp. japonica (Rice).